The primary structure comprises 348 residues: AT-hook motif nuclear-localized protein 9 (348 aa).

Residues H18 to S156 are disordered. Positions G31–N46 are enriched in polar residues. Positions S47–S60 are enriched in low complexity. The Bipartite nuclear localization signal signature appears at K98–K106. A DNA-binding region (a.T hook 1) is located at residues K98–D110. A compositionally biased stretch (low complexity) spans S112–N131. Positions K132–K144 form a DNA-binding region, a.T hook 2. Residues S157–E299 form the PPC domain.

It is found in the nucleus. Transcription factor that specifically binds AT-rich DNA sequences related to the nuclear matrix attachment regions (MARs). In Arabidopsis thaliana (Mouse-ear cress), this protein is AT-hook motif nuclear-localized protein 9.